Consider the following 131-residue polypeptide: MPEETLLAFDFGEKKIGIAIGNTLTRQARPLEIIFSEIREARFARIGQLLQQWQPQRVVVGLALASDGGEQPATARCRRFANQLRGRYGLAVELVDERGSSMEAQRLLGTHAPDDAVAAAVILQRYLDALP.

The protein belongs to the YqgF nuclease family.

It is found in the cytoplasm. Could be a nuclease involved in processing of the 5'-end of pre-16S rRNA. The sequence is that of Putative pre-16S rRNA nuclease from Bordetella petrii (strain ATCC BAA-461 / DSM 12804 / CCUG 43448).